Here is a 333-residue protein sequence, read N- to C-terminus: Flotillin-like protein FloA (333 aa).

Residues 9–29 (IVLIVGGIIFLILFFHYVPFF) traverse the membrane as a helical segment.

Belongs to the flotillin-like FloA family. Homooligomerizes.

The protein localises to the cell membrane. It localises to the membrane raft. Functionally, found in functional membrane microdomains (FMM) that may be equivalent to eukaryotic membrane rafts. FMMs are highly dynamic and increase in number as cells age. Flotillins are thought to be important factors in membrane fluidity. The protein is Flotillin-like protein FloA of Bacteroides thetaiotaomicron (strain ATCC 29148 / DSM 2079 / JCM 5827 / CCUG 10774 / NCTC 10582 / VPI-5482 / E50).